We begin with the raw amino-acid sequence, 530 residues long: 26S proteasome non-ATPase regulatory subunit 3 (530 aa).

Positions 1–16 are enriched in basic and acidic residues; the sequence is MKQEGSARRRGADKAK. The tract at residues 1–65 is disordered; sequence MKQEGSARRR…TEHSQRELDT (65 aa). Pro residues predominate over residues 17–30; the sequence is PPPGGEQEPPPPAP. A Glycyl lysine isopeptide (Lys-Gly) (interchain with G-Cter in SUMO1); alternate cross-link involves residue lysine 36. Lysine 36 is covalently cross-linked (Glycyl lysine isopeptide (Lys-Gly) (interchain with G-Cter in SUMO2); alternate). The PCI domain occupies 282–461; it reads ARYLYYTGRI…GYVQSKEMID (180 aa). Phosphoserine occurs at positions 414 and 426. A disordered region spans residues 496 to 530; it reads SYNKDLESAEERREREQQDLEFAKEMAEDDDDSFP. The span at 497–521 shows a compositional bias: basic and acidic residues; sequence YNKDLESAEERREREQQDLEFAKEM.

Belongs to the proteasome subunit S3 family. As to quaternary structure, component of the 19S proteasome regulatory particle complex. The 26S proteasome consists of a 20S core particle (CP) and two 19S regulatory subunits (RP). The regulatory particle is made of a lid composed of 9 subunits including PSMD3, a base containing 6 ATPases and few additional components. Interacts with UBQLN1 (via ubiquitin-like domain). Interacts with ERCC6.

Component of the 26S proteasome, a multiprotein complex involved in the ATP-dependent degradation of ubiquitinated proteins. This complex plays a key role in the maintenance of protein homeostasis by removing misfolded or damaged proteins, which could impair cellular functions, and by removing proteins whose functions are no longer required. Therefore, the proteasome participates in numerous cellular processes, including cell cycle progression, apoptosis, or DNA damage repair. The sequence is that of 26S proteasome non-ATPase regulatory subunit 3 (Psmd3) from Mus musculus (Mouse).